Consider the following 1169-residue polypeptide: Chromosome partition protein Smc (1169 aa).

Residue 32–39 (PNGCGKSN) coordinates ATP. 2 coiled-coil regions span residues 170-265 (ISKY…TGEE) and 307-481 (IRHT…ERLN). The region spanning 525 to 620 (DRLGEKIEVA…CASDPAEAAE (96 aa)) is the SMC hinge domain. Coiled-coil stretches lie at residues 656–914 (ALAR…MKLA) and 985–1014 (RYLE…ECRA).

Belongs to the SMC family. Homodimer.

The protein localises to the cytoplasm. Its function is as follows. Required for chromosome condensation and partitioning. The protein is Chromosome partition protein Smc of Methylococcus capsulatus (strain ATCC 33009 / NCIMB 11132 / Bath).